The primary structure comprises 211 residues: Glycerol-3-phosphate acyltransferase (211 aa).

The next 5 helical transmembrane spans lie at 5-25 (ALGM…ILFC), 58-78 (VLVF…ALGV), 80-100 (PLYL…PVFF), 112-132 (LGAI…TWLL), and 138-158 (GYSS…VWWF).

It belongs to the PlsY family. Probably interacts with PlsX.

The protein resides in the cell inner membrane. The enzyme catalyses an acyl phosphate + sn-glycerol 3-phosphate = a 1-acyl-sn-glycero-3-phosphate + phosphate. It participates in lipid metabolism; phospholipid metabolism. In terms of biological role, catalyzes the transfer of an acyl group from acyl-phosphate (acyl-PO(4)) to glycerol-3-phosphate (G3P) to form lysophosphatidic acid (LPA). This enzyme utilizes acyl-phosphate as fatty acyl donor, but not acyl-CoA or acyl-ACP. This Pectobacterium atrosepticum (strain SCRI 1043 / ATCC BAA-672) (Erwinia carotovora subsp. atroseptica) protein is Glycerol-3-phosphate acyltransferase.